The following is a 132-amino-acid chain: Large-conductance mechanosensitive channel (132 aa).

The next 3 helical transmembrane spans lie at 14-34 (VVDL…VSSL), 38-58 (IITP…LHFG), and 67-87 (GNFI…FMFI).

This sequence belongs to the MscL family. As to quaternary structure, homopentamer.

The protein localises to the cell membrane. In terms of biological role, channel that opens in response to stretch forces in the membrane lipid bilayer. May participate in the regulation of osmotic pressure changes within the cell. This chain is Large-conductance mechanosensitive channel, found in Bacillus cereus (strain G9842).